We begin with the raw amino-acid sequence, 889 residues long: DNA mismatch repair protein MutS (889 aa).

Low complexity predominate over residues Met1–Ser17. The segment at Met1–Gln20 is disordered. Position 640–647 (Gly640–Ser647) interacts with ATP.

The protein belongs to the DNA mismatch repair MutS family.

In terms of biological role, this protein is involved in the repair of mismatches in DNA. It is possible that it carries out the mismatch recognition step. This protein has a weak ATPase activity. The chain is DNA mismatch repair protein MutS from Pseudoalteromonas atlantica (strain T6c / ATCC BAA-1087).